Here is a 319-residue protein sequence, read N- to C-terminus: tRNA dimethylallyltransferase (319 aa).

Residue 10–17 (GPTAVGKT) participates in ATP binding. 12 to 17 (TAVGKT) contacts substrate. The segment at 35 to 38 (DSMQ) is interaction with substrate tRNA.

The protein belongs to the IPP transferase family. Monomer. Mg(2+) is required as a cofactor.

The catalysed reaction is adenosine(37) in tRNA + dimethylallyl diphosphate = N(6)-dimethylallyladenosine(37) in tRNA + diphosphate. In terms of biological role, catalyzes the transfer of a dimethylallyl group onto the adenine at position 37 in tRNAs that read codons beginning with uridine, leading to the formation of N6-(dimethylallyl)adenosine (i(6)A). This Symbiobacterium thermophilum (strain DSM 24528 / JCM 14929 / IAM 14863 / T) protein is tRNA dimethylallyltransferase.